Reading from the N-terminus, the 296-residue chain is MQRLDPWHGTCNLQFVAGSSGSQFQGGCTAPLKLMRAERGENGRCELPLLHTAGGLVGGDQLSINLGLRPNSRCLLTSVAAQKIYGSIGRSQLHPLGTWARQQVSAELDADSDLEWLPQELVLYADALFEQNLSVTLPMDGSFLSAEIVRLGRTAANETLGQGCWRSDVQIQRQTSEGRRWELVDRLEISDDALKGFHGLNQQPVFGTLVWAAPFPLQTTKINNLLDDIRQDRKALEGQMHCGALPQGLIARYSGFSSRDARFWFSRIWARTRQARNLASPKIPRVWPLQEYPLRP.

The protein belongs to the UreD family. As to quaternary structure, ureD, UreF and UreG form a complex that acts as a GTP-hydrolysis-dependent molecular chaperone, activating the urease apoprotein by helping to assemble the nickel containing metallocenter of UreC. The UreE protein probably delivers the nickel.

Its subcellular location is the cytoplasm. Its function is as follows. Required for maturation of urease via the functional incorporation of the urease nickel metallocenter. In Synechococcus sp. (strain CC9311), this protein is Urease accessory protein UreD.